The following is a 246-amino-acid chain: MRYQVDTHTHTLASSHAYSTIHDYIAEAKRKGIVLFATTDHGPDMADAPHAWHFINSRVIPRMVDGVGILRGIEANIKDEFGEIDCNEKMLNELDIVLAGFHEQVFAPKDRDTNTRAMINAMKKGLVHVITHPGNPKFPVDIHAIAEAAAKYNVALEINNSSFLHSRVGSDVNCTAIAKAVRDAGGWVSMGSDSHIAYSLGDLEMSQAILDDVDFPADRVLNRSPRVLLDFLESRGKPHIPEFAGL.

His-8, His-10, His-16, His-41, Glu-74, His-102, His-132, Asp-193, and His-195 together coordinate Zn(2+).

It belongs to the PHP family. Zn(2+) is required as a cofactor.

The chain is Probable phosphatase Tola_0828 from Tolumonas auensis (strain DSM 9187 / NBRC 110442 / TA 4).